A 463-amino-acid chain; its full sequence is Serine carboxypeptidase-like 32 (463 aa).

The first 22 residues, 1-22 (MMNISNVSIALYLCTLFAFVSS), serve as a signal peptide directing secretion. 3 cysteine pairs are disulfide-bonded: cysteine 86/cysteine 345, cysteine 249/cysteine 262, and cysteine 286/cysteine 313. An N-linked (GlcNAc...) asparagine glycan is attached at asparagine 137. The active site involves serine 179. Residues asparagine 201 and asparagine 250 are each glycosylated (N-linked (GlcNAc...) asparagine). N-linked (GlcNAc...) asparagine glycosylation is found at asparagine 341 and asparagine 354. Residues aspartate 384 and histidine 436 contribute to the active site.

This sequence belongs to the peptidase S10 family. Expressed in flowers.

It is found in the secreted. Functionally, probable carboxypeptidase. The sequence is that of Serine carboxypeptidase-like 32 (SCPL32) from Arabidopsis thaliana (Mouse-ear cress).